Reading from the N-terminus, the 252-residue chain is 3-dehydroquinate dehydratase (252 aa).

Residues Ser-21, 46-48 (EWR), and Arg-82 each bind 3-dehydroquinate. The active-site Proton donor/acceptor is the His-143. Residue Lys-170 is the Schiff-base intermediate with substrate of the active site. The 3-dehydroquinate site is built by Arg-213, Ser-232, and Gln-236.

It belongs to the type-I 3-dehydroquinase family. In terms of assembly, homodimer.

The enzyme catalyses 3-dehydroquinate = 3-dehydroshikimate + H2O. It functions in the pathway metabolic intermediate biosynthesis; chorismate biosynthesis; chorismate from D-erythrose 4-phosphate and phosphoenolpyruvate: step 3/7. Inhibited by (2R)-2-methyl-3-dehydroquinic acid. In terms of biological role, involved in the third step of the chorismate pathway, which leads to the biosynthesis of aromatic amino acids. Catalyzes the cis-dehydration of 3-dehydroquinate (DHQ) and introduces the first double bond of the aromatic ring to yield 3-dehydroshikimate. The reaction involves the formation of an imine intermediate between the keto group of 3-dehydroquinate and the epsilon-amino group of a Lys-170 at the active site. The protein is 3-dehydroquinate dehydratase of Salmonella typhimurium (strain LT2 / SGSC1412 / ATCC 700720).